Reading from the N-terminus, the 315-residue chain is Small ribosomal subunit biogenesis GTPase RsgA (315 aa).

Residues 80–241 (LSKQTHIIAS…IIDTPGIKGF (162 aa)) form the CP-type G domain. GTP-binding positions include 129–132 (NKVD) and 183–191 (GHSGTGKST). Residues Cys-265, Cys-270, His-272, and Cys-278 each contribute to the Zn(2+) site.

The protein belongs to the TRAFAC class YlqF/YawG GTPase family. RsgA subfamily. As to quaternary structure, monomer. Associates with 30S ribosomal subunit, binds 16S rRNA. Zn(2+) is required as a cofactor.

Its subcellular location is the cytoplasm. One of several proteins that assist in the late maturation steps of the functional core of the 30S ribosomal subunit. Helps release RbfA from mature subunits. May play a role in the assembly of ribosomal proteins into the subunit. Circularly permuted GTPase that catalyzes slow GTP hydrolysis, GTPase activity is stimulated by the 30S ribosomal subunit. The polypeptide is Small ribosomal subunit biogenesis GTPase RsgA (Christiangramia forsetii (strain DSM 17595 / CGMCC 1.15422 / KT0803) (Gramella forsetii)).